The sequence spans 1270 residues: Myosin-1 (1270 aa).

A disordered region spans residues 1–40 (MGHSRRPAGGEKKSRGFGRSKAAADVGDGRQAGKPQVKKA). Residues 50-729 (IGVSDLTLLS…TLFALETMRD (680 aa)) form the Myosin motor domain. Position 143–150 (143–150 (GESGAGKT)) interacts with ATP. Serine 371 carries the phosphoserine modification. The interval 418 to 500 (SIGILDIYGF…PGVFAALNDA (83 aa)) is actin-binding. IQ domains are found at residues 733 to 753 (HNMA…RIEC) and 754 to 779 (AIRI…QGHQ). Positions 787–980 (RRRMSLLGSR…TIHTSAGEPP (194 aa)) constitute a TH1 domain. Disordered stretches follow at residues 960–1102 (GASN…VLYD) and 1144–1270 (PEAY…DDEW). The span at 963-974 (NVDSYKSSTIHT) shows a compositional bias: polar residues. A compositionally biased stretch (pro residues) spans 1023–1058 (ARQPMPQPTPQPAAVQPPPAPRPAVSPAAQPRPVPQ). Residues 1059–1078 (PVAAVAAAQHTRNASSSSTR) show a composition bias toward low complexity. The span at 1079-1088 (APPPPPPATP) shows a compositional bias: pro residues. The SH3 domain occupies 1092–1153 (QRKPMAKVLY…PEAYLEEQVA (62 aa)). The segment covering 1157 to 1167 (KPAPPPPPPAA) has biased composition (pro residues). Composition is skewed to low complexity over residues 1168 to 1186 (PRAS…VAAK) and 1238 to 1252 (NSAS…LAEA).

It belongs to the TRAFAC class myosin-kinesin ATPase superfamily. Myosin family. In terms of processing, phosphorylation of the TEDS site (Ser-371) is required for the polarization of the actin cytoskeleton. Phosphorylation probably activates the myosin-I ATPase activity.

It is found in the cytoplasm. Its subcellular location is the cytoskeleton. The protein localises to the actin patch. In terms of biological role, type-I myosin implicated in the organization of the actin cytoskeleton. Required for proper actin cytoskeleton polarization. At the cell cortex, assembles in patch-like structures together with proteins from the actin-polymerizing machinery and promotes actin assembly. Functions as actin nucleation-promoting factor (NPF) for the Arp2/3 complex. Plays an important role in polarized growth, spore germination, hyphal morphogenesis, and septal wall formation. This is Myosin-1 (myoA) from Aspergillus niger (strain ATCC MYA-4892 / CBS 513.88 / FGSC A1513).